The sequence spans 74 residues: UPF0248 protein MK0350 (74 aa).

The protein belongs to the UPF0248 family.

The protein is UPF0248 protein MK0350 of Methanopyrus kandleri (strain AV19 / DSM 6324 / JCM 9639 / NBRC 100938).